The following is a 442-amino-acid chain: tRNA modification GTPase MnmE (442 aa).

3 residues coordinate (6S)-5-formyl-5,6,7,8-tetrahydrofolate: Arg-27, Glu-84, and Lys-124. In terms of domain architecture, TrmE-type G spans 221–366 (GLHVVIVGAP…LLTNLQNFAE (146 aa)). GTP is bound by residues 231–236 (NAGKSS), 250–256 (SEEAGTT), and 275–278 (DTAG). Residues Ser-235 and Thr-256 each contribute to the Mg(2+) site. Lys-442 serves as a coordination point for (6S)-5-formyl-5,6,7,8-tetrahydrofolate.

Belongs to the TRAFAC class TrmE-Era-EngA-EngB-Septin-like GTPase superfamily. TrmE GTPase family. In terms of assembly, homodimer. Heterotetramer of two MnmE and two MnmG subunits. Requires K(+) as cofactor.

It localises to the cytoplasm. Exhibits a very high intrinsic GTPase hydrolysis rate. Involved in the addition of a carboxymethylaminomethyl (cmnm) group at the wobble position (U34) of certain tRNAs, forming tRNA-cmnm(5)s(2)U34. The sequence is that of tRNA modification GTPase MnmE from Brucella anthropi (strain ATCC 49188 / DSM 6882 / CCUG 24695 / JCM 21032 / LMG 3331 / NBRC 15819 / NCTC 12168 / Alc 37) (Ochrobactrum anthropi).